A 461-amino-acid polypeptide reads, in one-letter code: Serine incorporator 5 (461 aa).

The Extracellular segment spans residues 1-36; the sequence is MSARCCAGQLACCCGSAGCSLCCGCCPKFRQSRTTR. Residues 37-57 form a helical membrane-spanning segment; that stretch reads FMYLFYFILVIALCCVMMTPS. The Cytoplasmic segment spans residues 58-90; the sequence is VMKQVKDHIPFFEEFCKKTQAGGDACENLVGYS. The chain crosses the membrane as a helical span at residues 91-111; the sequence is AVYRVCFGMACFFALFCLLTL. Residues 112-125 are Extracellular-facing; sequence KVNNSKSCRAYIHN. N-linked (GlcNAc...) asparagine glycosylation occurs at Asn-114. A helical membrane pass occupies residues 126-146; that stretch reads GFWFFKLLLLGAMCSGAFFIP. The Cytoplasmic portion of the chain corresponds to 147–157; the sequence is DQETFLKVWRY. The chain crosses the membrane as a helical span at residues 158 to 178; sequence VGAGGSFLFICIQLLLIVQFA. Topologically, residues 179–200 are extracellular; that stretch reads HKWNKNWTAGTVRNKLWYASLS. Residue Asn-184 is glycosylated (N-linked (GlcNAc...) asparagine). The chain crosses the membrane as a helical span at residues 201–221; the sequence is LVTLIMYSVAVGGLALMAVFY. Residues 222-231 lie on the Cytoplasmic side of the membrane; sequence TQWDDCMDNK. Residues 232–252 traverse the membrane as a helical segment; that stretch reads ILLGVHGGLCVLISLVAISPC. Topologically, residues 253 to 260 are extracellular; the sequence is VQNRQPHS. Residues 261-281 traverse the membrane as a helical segment; the sequence is GLLQSGLISCYVTYLTFSALT. Residues 282 to 312 lie on the Cytoplasmic side of the membrane; that stretch reads SKPEKKVLDEHGKNVTICAPDFGQDLHRDEN. A helical membrane pass occupies residues 313-333; it reads MVTWLGTLLLIVCISYSCLTS. The Extracellular portion of the chain corresponds to 334-392; the sequence is TTRSSSDALQSRYGAPELEVARCCFCFGPDGEDTEEQQNVKKGPRVIYDEKKGTVYSYS. Residues 393-413 form a helical membrane-spanning segment; that stretch reads YFHFVFFLASLYVMMTLTSWF. Over 414–422 the chain is Cytoplasmic; it reads HYENATIKT. A helical transmembrane segment spans residues 423–443; that stretch reads FFSGWSVFWVKMASCWMCVLL. The Extracellular portion of the chain corresponds to 444–461; that stretch reads YLQTLVAPLCCPSRQFSV.

This sequence belongs to the TDE1 family.

The protein resides in the cell membrane. It carries out the reaction a 1,2-diacyl-sn-glycero-3-phospho-L-serine(in) = a 1,2-diacyl-sn-glycero-3-phospho-L-serine(out). The catalysed reaction is a 1,2-diacyl-sn-glycero-3-phosphocholine(in) = a 1,2-diacyl-sn-glycero-3-phosphocholine(out). The enzyme catalyses a 1,2-diacyl-sn-glycero-3-phosphoethanolamine(in) = a 1,2-diacyl-sn-glycero-3-phosphoethanolamine(out). Functionally, restriction factor required to restrict infectivity of gammaretroviruses: acts by inhibiting an early step of viral infection. Impairs the penetration of the viral particle into the cytoplasm. Non-ATP-dependent, non-specific lipid transporter for phosphatidylserine, phosphatidylcholine, and phosphatidylethanolamine. Functions as a scramblase that flips lipids in both directions across the membrane. Phospholipid scrambling results in gammaretroviral surface exposure of phosphatidylserine and loss of membrane asymmetry, which leads to loss of infectivity. Enhances the incorporation of serine into phosphatidylserine and sphingolipids. May play a role in providing serine molecules for the formation of myelin glycosphingolipids in oligodendrocytes. The protein is Serine incorporator 5 (Serinc5) of Mus musculus (Mouse).